A 673-amino-acid polypeptide reads, in one-letter code: Poly(glycerol-phosphate) alpha-glucosyltransferase (673 aa).

Residue S2 is modified to Phosphoserine.

This sequence belongs to the glycosyltransferase group 1 family. Glycosyltransferase 4 subfamily.

The protein localises to the cytoplasm. It carries out the reaction 4-O-{[(2R)-1-glycerylphospho](n)-(2R)-1-glycerylphospho}-N-acetyl-beta-D-mannosaminyl-(1-&gt;4)-N-acetyl-alpha-D-glucosaminyl undecaprenyl diphosphate + n UDP-alpha-D-glucose = 4-O-{[(2R)-2-alpha-D-glucosyl-1-glycerylphospho](n)-(2R)-1-glycerylphospho}-N-acetyl-beta-D-mannosaminyl-(1-&gt;4)-N-acetyl-alpha-D-glucosaminyl undecaprenyl diphosphate + n UDP + n H(+). It functions in the pathway cell wall biogenesis; poly(glycerol phosphate) teichoic acid biosynthesis. Catalyzes the addition of glucose to the C-2 hydroxy group of the glycerol units in teichoic acid. The protein is Poly(glycerol-phosphate) alpha-glucosyltransferase (tagE) of Bacillus subtilis (strain 168).